The sequence spans 222 residues: UPF0688 protein C1orf174 homolog (222 aa).

Disordered regions lie at residues 23 to 57 (STSLASAGDIASSTSAKTTCLASSSHKATDRRTSK) and 98 to 158 (EDGA…EPVP). Residues 33 to 48 (ASSTSAKTTCLASSSH) show a composition bias toward polar residues. Over residues 121 to 131 (VSEEPSVKAEE) the composition is skewed to basic and acidic residues. At Ser172 the chain carries Phosphoserine.

This sequence belongs to the UPF0688 family.

The protein localises to the nucleus. The sequence is that of UPF0688 protein C1orf174 homolog from Rattus norvegicus (Rat).